The primary structure comprises 34 residues: Photosystem II reaction center protein Psb30 (34 aa).

The chain crosses the membrane as a helical span at residues 6-26 (VIGQLVSTGAIMLLGPAIIIL).

It belongs to the Psb30/Ycf12 family. In terms of assembly, PSII is composed of 1 copy each of membrane proteins PsbA, PsbB, PsbC, PsbD, PsbE, PsbF, PsbH, PsbI, PsbJ, PsbK, PsbL, PsbM, PsbT, PsbX, PsbY, PsbZ, Psb30/Ycf12, peripheral proteins of the oxygen-evolving complex and a large number of cofactors. It forms dimeric complexes.

It is found in the plastid. The protein localises to the chloroplast thylakoid membrane. Functionally, a core subunit of photosystem II (PSII), probably helps stabilize the reaction center. The polypeptide is Photosystem II reaction center protein Psb30 (Thalassiosira pseudonana (Marine diatom)).